A 535-amino-acid polypeptide reads, in one-letter code: Protein translocase subunit SecD (535 aa).

6 helical membrane-spanning segments follow: residues 5 to 25 (LTWKVVVIVAVLLVFAFGIIG), 377 to 397 (AIIGFVAVIIFMLIYYKGAGI), 402 to 421 (SLLLNLVILLGFMGYFGAVL), 425 to 444 (GIAGVILTVGMGVDSNVLIF), 469 to 489 (WLTIIDTHVTTIVSAIILFLF), and 496 to 516 (GFAVTLSFGLFANLFTAVFVS).

It belongs to the SecD/SecF family. SecD subfamily. As to quaternary structure, forms a complex with SecF. Part of the essential Sec protein translocation apparatus which comprises SecA, SecYEG and auxiliary proteins SecDF. Other proteins may also be involved.

Its subcellular location is the cell inner membrane. Its function is as follows. Part of the Sec protein translocase complex. Interacts with the SecYEG preprotein conducting channel. SecDF uses the proton motive force (PMF) to complete protein translocation after the ATP-dependent function of SecA. In Koribacter versatilis (strain Ellin345), this protein is Protein translocase subunit SecD.